The primary structure comprises 457 residues: Antizyme inhibitor 2 (457 aa).

The tract at residues 115-138 is necessary for polyamine uptake stimulation; sequence QVAQIKYAAKHGVRLLSFDNEVEL.

Belongs to the Orn/Lys/Arg decarboxylase class-II family. ODC antizyme inhibitor subfamily. Monomer. Interacts with OAZ1, OAZ2 and OAZ3; this interaction disrupts the interaction between the antizyme and ODC1. Does not form a heterodimer with ODC1. Ubiquitinated, leading to its proteasomal degradation; a process that is reduced in presence of antizymes. May also be degraded through the lysosomal degradative pathway in a proteasomal-independent manner.

The protein resides in the nucleus. Its subcellular location is the cytoplasm. It is found in the perinuclear region. It localises to the membrane. The protein localises to the cytoplasmic vesicle. The protein resides in the endoplasmic reticulum-Golgi intermediate compartment. Its subcellular location is the golgi apparatus. It is found in the cis-Golgi network. It localises to the trans-Golgi network. The protein localises to the cytoplasmic granule. The protein resides in the cell projection. Its subcellular location is the axon. It is found in the dendrite. It localises to the perikaryon. Its function is as follows. Antizyme inhibitor (AZI) protein that positively regulates ornithine decarboxylase (ODC) activity and polyamine uptake. AZI is an enzymatically inactive ODC homolog that counteracts the negative effect of ODC antizymes (AZs) OAZ1, OAZ2 and OAZ3 on ODC activity by competing with ODC for antizyme-binding. Inhibits antizyme-dependent ODC degradation and releases ODC monomers from their inactive complex with antizymes, leading to formation of the catalytically active ODC homodimer and restoring polyamine production. Participates in the morphological integrity of the trans-Golgi network (TGN) and functions as a regulator of intracellular secretory vesicle trafficking. This chain is Antizyme inhibitor 2 (Azin2), found in Rattus norvegicus (Rat).